We begin with the raw amino-acid sequence, 98 residues long: NADH-ubiquinone oxidoreductase chain 4L (98 aa).

3 consecutive transmembrane segments (helical) span residues 1-21, 29-49, and 61-81; these read MSLT…GLLM, SLLC…ITIL, and IILL…LVMV.

Belongs to the complex I subunit 4L family. As to quaternary structure, core subunit of respiratory chain NADH dehydrogenase (Complex I) which is composed of 45 different subunits.

Its subcellular location is the mitochondrion inner membrane. The enzyme catalyses a ubiquinone + NADH + 5 H(+)(in) = a ubiquinol + NAD(+) + 4 H(+)(out). Its function is as follows. Core subunit of the mitochondrial membrane respiratory chain NADH dehydrogenase (Complex I) which catalyzes electron transfer from NADH through the respiratory chain, using ubiquinone as an electron acceptor. Part of the enzyme membrane arm which is embedded in the lipid bilayer and involved in proton translocation. The protein is NADH-ubiquinone oxidoreductase chain 4L (MT-ND4L) of Artibeus jamaicensis (Jamaican fruit-eating bat).